Here is a 142-residue protein sequence, read N- to C-terminus: Hemoglobin subunit beta (142 aa).

The 140-residue stretch at 3–142 (KLSEDQEHYI…VAEALSSNYH (140 aa)) folds into the Globin domain. Histidine 60 and histidine 89 together coordinate heme b.

It belongs to the globin family. As to quaternary structure, heterotetramer of two alpha chains and two beta chains. Red blood cells.

Functionally, involved in oxygen transport from gills to the various peripheral tissues. This is Hemoglobin subunit beta (HBB) from Hemitrygon akajei (Red stingray).